Reading from the N-terminus, the 189-residue chain is Xanthine phosphoribosyltransferase (189 aa).

Xanthine is bound by residues L20 and N27. 127 to 131 contributes to the 5-phospho-alpha-D-ribose 1-diphosphate binding site; that stretch reads AYGNA. Residue K155 participates in xanthine binding.

The protein belongs to the purine/pyrimidine phosphoribosyltransferase family. Xpt subfamily. Homodimer.

Its subcellular location is the cytoplasm. It carries out the reaction XMP + diphosphate = xanthine + 5-phospho-alpha-D-ribose 1-diphosphate. It participates in purine metabolism; XMP biosynthesis via salvage pathway; XMP from xanthine: step 1/1. In terms of biological role, converts the preformed base xanthine, a product of nucleic acid breakdown, to xanthosine 5'-monophosphate (XMP), so it can be reused for RNA or DNA synthesis. The protein is Xanthine phosphoribosyltransferase of Bacteroides fragilis (strain ATCC 25285 / DSM 2151 / CCUG 4856 / JCM 11019 / LMG 10263 / NCTC 9343 / Onslow / VPI 2553 / EN-2).